The sequence spans 888 residues: Pumilio homology domain family member 4 (888 aa).

A phosphothreonine mark is found at threonine 205, threonine 212, and threonine 252. Disordered stretches follow at residues lysine 236–threonine 270 and methionine 467–glutamate 551. A compositionally biased stretch (polar residues) spans glycine 243–threonine 270. Serine 256 bears the Phosphoserine mark. Composition is skewed to low complexity over residues asparagine 478–lysine 499 and asparagine 521–serine 543. The PUM-HD domain maps to threonine 539–serine 888. Pumilio repeat units lie at residues glutamine 563 to glutamate 598, glutamate 599 to lysine 634, isoleucine 635 to aspartate 671, serine 672 to aspartate 707, alanine 708 to aspartate 743, lysine 744 to histidine 783, leucine 784 to asparagine 821, and glycine 823 to glutamate 861.

Functionally, is not essential for haploid growth, but may affect diploid formation. The sequence is that of Pumilio homology domain family member 4 (PUF4) from Saccharomyces cerevisiae (strain ATCC 204508 / S288c) (Baker's yeast).